A 59-amino-acid polypeptide reads, in one-letter code: Cuticle protein 7 isoform a (59 aa).

Gln-1 bears the Pyrrolidone carboxylic acid mark.

This chain is Cuticle protein 7 isoform a, found in Limulus polyphemus (Atlantic horseshoe crab).